The sequence spans 169 residues: Peptide deformylase 1 (169 aa).

2 residues coordinate Fe cation: cysteine 91 and histidine 133. Glutamate 134 is an active-site residue. A Fe cation-binding site is contributed by histidine 137.

It belongs to the polypeptide deformylase family. Requires Fe(2+) as cofactor.

It catalyses the reaction N-terminal N-formyl-L-methionyl-[peptide] + H2O = N-terminal L-methionyl-[peptide] + formate. Its function is as follows. Removes the formyl group from the N-terminal Met of newly synthesized proteins. Requires at least a dipeptide for an efficient rate of reaction. N-terminal L-methionine is a prerequisite for activity but the enzyme has broad specificity at other positions. This is Peptide deformylase 1 from Vibrio cholerae serotype O1 (strain ATCC 39315 / El Tor Inaba N16961).